The primary structure comprises 615 residues: ATP-dependent zinc metalloprotease FtsH 2 (615 aa).

The Cytoplasmic segment spans residues 1 to 7; sequence MNEPNRN. A helical membrane pass occupies residues 8–28; sequence FFWIFFLILGIFWLQSVWFGS. Over 29–99 the chain is Periplasmic; sequence RTVQQIPYSQ…VTYRREIENT (71 aa). A helical membrane pass occupies residues 100–120; the sequence is FFRDLLSWVVPALIFVAVFLY. At 121–615 the chain is on the cytoplasmic side; the sequence is FSRKFAEKGG…APQRERDLSV (495 aa). 195–202 is an ATP binding site; that stretch reads GPPGTGKT. His-418 is a binding site for Zn(2+). Residue Glu-419 is part of the active site. The Zn(2+) site is built by His-422 and Asp-495.

This sequence in the central section; belongs to the AAA ATPase family. It in the C-terminal section; belongs to the peptidase M41 family. As to quaternary structure, homohexamer. Requires Zn(2+) as cofactor.

Its subcellular location is the cell inner membrane. Functionally, acts as a processive, ATP-dependent zinc metallopeptidase for both cytoplasmic and membrane proteins. Plays a role in the quality control of integral membrane proteins. The polypeptide is ATP-dependent zinc metalloprotease FtsH 2 (Bdellovibrio bacteriovorus (strain ATCC 15356 / DSM 50701 / NCIMB 9529 / HD100)).